The primary structure comprises 887 residues: Alanine--tRNA ligase (887 aa).

Residues H564, H568, C676, and H680 each coordinate Zn(2+).

This sequence belongs to the class-II aminoacyl-tRNA synthetase family. Zn(2+) serves as cofactor.

Its subcellular location is the cytoplasm. It catalyses the reaction tRNA(Ala) + L-alanine + ATP = L-alanyl-tRNA(Ala) + AMP + diphosphate. Catalyzes the attachment of alanine to tRNA(Ala) in a two-step reaction: alanine is first activated by ATP to form Ala-AMP and then transferred to the acceptor end of tRNA(Ala). Also edits incorrectly charged Ser-tRNA(Ala) and Gly-tRNA(Ala) via its editing domain. This is Alanine--tRNA ligase from Sinorhizobium medicae (strain WSM419) (Ensifer medicae).